Here is a 398-residue protein sequence, read N- to C-terminus: Succinate--CoA ligase [ADP-forming] subunit beta (398 aa).

Residues 9-253 enclose the ATP-grasp domain; it reads KQVLAKYGVA…ESEEDPAELE (245 aa). Residues Lys-46, 53 to 55, Glu-108, Cys-111, and Glu-116 contribute to the ATP site; that span reads GRG. The Mg(2+) site is built by Asn-208 and Asp-222. Residues Asn-273 and 330–332 contribute to the substrate site; that span reads GIM.

The protein belongs to the succinate/malate CoA ligase beta subunit family. As to quaternary structure, heterotetramer of two alpha and two beta subunits. Requires Mg(2+) as cofactor.

It catalyses the reaction succinate + ATP + CoA = succinyl-CoA + ADP + phosphate. The catalysed reaction is GTP + succinate + CoA = succinyl-CoA + GDP + phosphate. It participates in carbohydrate metabolism; tricarboxylic acid cycle; succinate from succinyl-CoA (ligase route): step 1/1. Its function is as follows. Succinyl-CoA synthetase functions in the citric acid cycle (TCA), coupling the hydrolysis of succinyl-CoA to the synthesis of either ATP or GTP and thus represents the only step of substrate-level phosphorylation in the TCA. The beta subunit provides nucleotide specificity of the enzyme and binds the substrate succinate, while the binding sites for coenzyme A and phosphate are found in the alpha subunit. The polypeptide is Succinate--CoA ligase [ADP-forming] subunit beta (Paramagnetospirillum magneticum (strain ATCC 700264 / AMB-1) (Magnetospirillum magneticum)).